A 256-amino-acid chain; its full sequence is Thiazole synthase (256 aa).

Lys95 functions as the Schiff-base intermediate with DXP in the catalytic mechanism. 1-deoxy-D-xylulose 5-phosphate contacts are provided by residues Gly156, 182-183, and 204-205; these read AG and NT.

This sequence belongs to the ThiG family. As to quaternary structure, homotetramer. Forms heterodimers with either ThiH or ThiS.

The protein resides in the cytoplasm. It catalyses the reaction [ThiS sulfur-carrier protein]-C-terminal-Gly-aminoethanethioate + 2-iminoacetate + 1-deoxy-D-xylulose 5-phosphate = [ThiS sulfur-carrier protein]-C-terminal Gly-Gly + 2-[(2R,5Z)-2-carboxy-4-methylthiazol-5(2H)-ylidene]ethyl phosphate + 2 H2O + H(+). Its pathway is cofactor biosynthesis; thiamine diphosphate biosynthesis. Functionally, catalyzes the rearrangement of 1-deoxy-D-xylulose 5-phosphate (DXP) to produce the thiazole phosphate moiety of thiamine. Sulfur is provided by the thiocarboxylate moiety of the carrier protein ThiS. In vitro, sulfur can be provided by H(2)S. The polypeptide is Thiazole synthase (Salmonella agona (strain SL483)).